Reading from the N-terminus, the 51-residue chain is Cytochrome b559 subunit beta (51 aa).

A helical membrane pass occupies residues 26–42; sequence WLAVHALTVPTIFFLGA. Histidine 30 provides a ligand contact to heme.

This sequence belongs to the PsbE/PsbF family. In terms of assembly, heterodimer of an alpha subunit and a beta subunit. PSII is composed of 1 copy each of membrane proteins PsbA, PsbB, PsbC, PsbD, PsbE, PsbF, PsbH, PsbI, PsbJ, PsbK, PsbL, PsbM, PsbT, PsbX, Psb30/Ycf12, peripheral proteins PsbO, CyanoQ (PsbQ), PsbU, PsbV and a large number of cofactors. It forms dimeric complexes. Heme b is required as a cofactor.

It localises to the cell inner membrane. In terms of biological role, this b-type cytochrome is tightly associated with the reaction center of photosystem II (PSII). PSII is a light-driven water:plastoquinone oxidoreductase that uses light energy to abstract electrons from H(2)O, generating O(2) and a proton gradient subsequently used for ATP formation. It consists of a core antenna complex that captures photons, and an electron transfer chain that converts photonic excitation into a charge separation. The chain is Cytochrome b559 subunit beta from Gloeobacter violaceus (strain ATCC 29082 / PCC 7421).